Here is a 704-residue protein sequence, read N- to C-terminus: Mannan-binding lectin serine protease 1 (704 aa).

A signal peptide spans 1-24 (MRFLSFRRLLLYHVLCLTLTEVSA). One can recognise a CUB 1 domain in the interval 25–143 (HTVELNEMFG…TGFDAHYMAV (119 aa)). The tract at residues 25–189 (HTVELNEMFG…HTDNRTCRVE (165 aa)) is homodimerization. Positions 25–189 (HTVELNEMFG…HTDNRTCRVE (165 aa)) are interaction with MBL2. Positions 25–283 (HTVELNEMFG…STQSHSIQIL (259 aa)) are interaction with FCN2. The segment at 25–305 (HTVELNEMFG…RLSYRAAGNE (281 aa)) is interaction with MBL1. N-linked (GlcNAc...) asparagine glycosylation occurs at Asn54. 7 residues coordinate Ca(2+): Glu73, Asp81, Asp126, Ser128, Asp144, Val145, and Glu147. The cysteines at positions 78 and 96 are disulfide-linked. Positions 144-187 (DVDECKEREDEELSCDHYCHNYIGGYYCSCRFGYILHTDNRTCR) constitute an EGF-like; calcium-binding domain. 4 disulfide bridges follow: Cys148/Cys162, Cys158/Cys171, Cys173/Cys186, and Cys190/Cys217. Positions 164, 165, and 168 each coordinate Ca(2+). Asn164 carries the (3R)-3-hydroxyasparagine modification. Asn183 carries N-linked (GlcNAc...) asparagine glycosylation. The 113-residue stretch at 190–302 (CSGNLFTQRT…RGWRLSYRAA (113 aa)) folds into the CUB 2 domain. Residues Glu240, Asp250, Asp287, and Ser289 each coordinate Ca(2+). Residues Cys247 and Cys265 are joined by a disulfide bond. 2 consecutive Sushi domains span residues 304-369 (NECP…TCKI) and 370-439 (VDCG…TCLP). Disulfide bonds link Cys306–Cys354, Cys334–Cys367, Cys372–Cys419, Cys402–Cys437, Cys441–Cys577, and Cys480–Cys496. 2 N-linked (GlcNAc...) asparagine glycosylation sites follow: Asn390 and Asn412. The Peptidase S1 domain occupies 454 to 701 (IFNGRPAQKG…NKDWIQRVTG (248 aa)). His495 acts as the Charge relay system in catalysis. N-linked (GlcNAc...) asparagine glycosylation is present at Leu538. Residue Asp557 is the Charge relay system of the active site. Glu604 carries an N-linked (GlcNAc...) asparagine glycan. Cystine bridges form between Cys619–Cys636 and Cys647–Cys677. The active-site Charge relay system is the Ser651.

It belongs to the peptidase S1 family. As to quaternary structure, homodimer. Interacts with the oligomeric lectins MBL2, FCN2 and FCN3; triggers the lectin pathway of complement through activation of C3. Interacts with SERPING1. Interacts with COLEC11; probably triggers the lectin pathway of complement. In terms of processing, the iron and 2-oxoglutarate dependent 3-hydroxylation of aspartate and asparagine is (R) stereospecific within EGF domains. N-glycosylated. Some N-linked glycan are of the complex-type. Post-translationally, autoproteolytic processing of the proenzyme produces the active enzyme composed on the heavy and the light chain held together by a disulfide bond. Isoform 1 but not isoform 2 is activated through autoproteolytic processing. In terms of tissue distribution, protein of the plasma which is primarily expressed by liver.

The protein resides in the secreted. With respect to regulation, inhibited by SERPING1 and A2M. Its function is as follows. Functions in the lectin pathway of complement, which performs a key role in innate immunity by recognizing pathogens through patterns of sugar moieties and neutralizing them. The lectin pathway is triggered upon binding of mannan-binding lectin (MBL) and ficolins to sugar moieties which leads to activation of the associated proteases MASP1 and MASP2. Functions as an endopeptidase and may activate MASP2 or C2 or directly activate C3 the key component of complement reaction. Isoform 2 may have an inhibitory effect on the activation of the lectin pathway of complement or may cleave IGFBP5. Also plays a role in development. In Rattus norvegicus (Rat), this protein is Mannan-binding lectin serine protease 1 (Masp1).